Consider the following 525-residue polypeptide: GMP synthase [glutamine-hydrolyzing] (525 aa).

The 199-residue stretch at 9 to 207 (RILILDFGSQ…VRDICQCEAL (199 aa)) folds into the Glutamine amidotransferase type-1 domain. Cys-86 serves as the catalytic Nucleophile. Residues His-181 and Glu-183 contribute to the active site. The GMPS ATP-PPase domain occupies 208–400 (WTPAKIIDDA…LGLPYDMLYR (193 aa)). 235–241 (SGGVDSS) is an ATP binding site.

In terms of assembly, homodimer.

It catalyses the reaction XMP + L-glutamine + ATP + H2O = GMP + L-glutamate + AMP + diphosphate + 2 H(+). Its pathway is purine metabolism; GMP biosynthesis; GMP from XMP (L-Gln route): step 1/1. Catalyzes the synthesis of GMP from XMP. In Klebsiella pneumoniae subsp. pneumoniae (strain ATCC 700721 / MGH 78578), this protein is GMP synthase [glutamine-hydrolyzing].